Reading from the N-terminus, the 308-residue chain is Putative mitochondrial transporter UCP3 (308 aa).

The Mitochondrial intermembrane portion of the chain corresponds to 1-10 (MVGLKPPEVP). Residues 11 to 32 (PTTAVKLLGAGTAACFADLLTF) traverse the membrane as a helical segment. Solcar repeat units follow at residues 11-102 (PTTA…VKQL), 111-202 (SSIT…IKEK), and 211-296 (DNLP…LKRA). Over 33 to 73 (PLDTAKVRLQIQGENQAARSAQYRGVLGTILTMVRNEGPRS) the chain is Mitochondrial matrix. The helical transmembrane segment at 74-96 (PYNGLVAGLQRQMSFASIRIGLY) threads the bilayer. Topologically, residues 97–116 (DSVKQLYTPKGSDHSSITTR) are mitochondrial intermembrane. A helical membrane pass occupies residues 117–133 (ILAGCTTGAMAVTCAQP). Topologically, residues 134 to 179 (TDVVKVRFQASIHAGPRSNRKYSGTMDAYRTIAREEGVRGLWKGIL) are mitochondrial matrix. Residues 180-196 (PNITRNAIVNCAEMVTY) form a helical membrane-spanning segment. Topologically, residues 197–213 (DVIKEKVLDYHLLTDNL) are mitochondrial intermembrane. A helical membrane pass occupies residues 214–233 (PCHFVSAFGAGFCATVVASP). The Mitochondrial matrix portion of the chain corresponds to 234–267 (VDVVKTRYMNSPPGQYQNPLDCMLKMVTQEGPTA). A helical membrane pass occupies residues 268 to 290 (FYKGFTPSFLRLGSWNVVMFVSY). The purine nucleotide binding stretch occupies residues 275-297 (SFLRLGSWNVVMFVSYEQLKRAL). At 291–308 (EQLKRALMKVQMLRESPF) the chain is on the mitochondrial intermembrane side.

The protein belongs to the mitochondrial carrier (TC 2.A.29) family. Interacts with HAX1; the interaction is direct and calcium-dependent.

It is found in the mitochondrion inner membrane. Functionally, putative transmembrane transporter that plays a role in mitochondrial metabolism via an as yet unclear mechanism. Originally, this mitochondrial protein was thought to act as a proton transmembrane transporter from the mitochondrial intermembrane space into the matrix, causing proton leaks through the inner mitochondrial membrane, thereby uncoupling mitochondrial membrane potential generation from ATP synthesis. However, this function is controversial and uncoupling may not be the function, or at least not the main function, but rather a consequence of more conventional metabolite transporter activity. The protein is Putative mitochondrial transporter UCP3 of Sus scrofa (Pig).